Reading from the N-terminus, the 743-residue chain is Catalase-peroxidase (743 aa).

Residues 1–21 form a disordered region; that stretch reads MSENHETVVSELNEESGGGCP. The segment at residues 108–231 is a cross-link (tryptophyl-tyrosyl-methioninium (Trp-Tyr) (with M-257)); the sequence is WHSAGTYRIS…LGAVQMGLIY (124 aa). Residue histidine 109 is the Proton acceptor of the active site. The segment at residues 231 to 257 is a cross-link (tryptophyl-tyrosyl-methioninium (Tyr-Met) (with W-108)); that stretch reads YVNPEGPNGTPDPLAAARDIRETFRRM. A heme b-binding site is contributed by histidine 272. The interval 275–296 is disordered; it reads GKTHGAGDPDNVGPEPEGAPLE.

It belongs to the peroxidase family. Peroxidase/catalase subfamily. Homodimer or homotetramer. It depends on heme b as a cofactor. Post-translationally, formation of the three residue Trp-Tyr-Met cross-link is important for the catalase, but not the peroxidase activity of the enzyme.

The catalysed reaction is H2O2 + AH2 = A + 2 H2O. It carries out the reaction 2 H2O2 = O2 + 2 H2O. Functionally, bifunctional enzyme with both catalase and broad-spectrum peroxidase activity. The sequence is that of Catalase-peroxidase from Parafrankia sp. (strain EAN1pec).